The following is a 129-amino-acid chain: MKRARGFTLLEVLVALAIFAMVAASVLSASARSLQNASRLEDKTLAMWIADNRLNELQLEQTPPSSGRNQGELEFAGRRWEWRTQVDSTAEQDMRRVIVWVAAKPLGRERGSIEERAAARLVGFLGSQP.

A propeptide spans 1 to 6 (MKRARG) (leader sequence). Position 7 is an N-methylphenylalanine (phenylalanine 7). A helical membrane pass occupies residues 7-27 (FTLLEVLVALAIFAMVAASVL).

It belongs to the GSP I family. Type II secretion is composed of four main components: the outer membrane complex, the inner membrane complex, the cytoplasmic secretion ATPase and the periplasm-spanning pseudopilus. Forms the tip of the type II pseudopilus by interacting with XcpU, XcpW and XcpX. Interacts with core component XcpT. In terms of processing, cleaved by prepilin peptidase. Methylated by prepilin peptidase at the amino group of the N-terminal phenylalanine once the leader sequence is cleaved by prepilin peptidase.

It localises to the cell inner membrane. Functionally, component of the type II secretion system required for the energy-dependent secretion of extracellular factors such as proteases and toxins from the periplasm. Part of the pseudopilus tip complex that is critical for the recognition and binding of secretion substrates. Type II pseudopilus confers increased bacterial adhesive capabilities. The chain is Type II secretion system protein I (xcpV) from Pseudomonas aeruginosa (strain ATCC 15692 / DSM 22644 / CIP 104116 / JCM 14847 / LMG 12228 / 1C / PRS 101 / PAO1).